A 30-amino-acid polypeptide reads, in one-letter code: uncharacterized protein (30 aa).

The disordered stretch occupies residues 1-30; it reads MHLSTLPNVPWPNRSFTTKRPPLPNMSFSW.

This is an uncharacterized protein from Saccharomyces cerevisiae (strain ATCC 204508 / S288c) (Baker's yeast).